The sequence spans 451 residues: Cysteine protease ATG4 (451 aa).

C122 serves as the catalytic Nucleophile. Active-site residues include D297 and H299.

This sequence belongs to the peptidase C54 family. Interacts with ATG8.

The protein resides in the cytoplasm. Its subcellular location is the nucleus. The protein localises to the preautophagosomal structure. It carries out the reaction [protein]-C-terminal L-amino acid-glycyl-phosphatidylethanolamide + H2O = [protein]-C-terminal L-amino acid-glycine + a 1,2-diacyl-sn-glycero-3-phosphoethanolamine. Its function is as follows. Cysteine protease that plays a key role in cytoplasm to vacuole transport (Cvt) and autophagy by mediating both proteolytic activation and delipidation of ATG8. Required for selective autophagic degradation of the nucleus (nucleophagy) as well as for mitophagy which contributes to regulate mitochondrial quantity and quality by eliminating the mitochondria to a basal level to fulfill cellular energy requirements and preventing excess ROS production. The protease activity is required for proteolytic activation of ATG8: cleaves the C-terminal amino acid of ATG8 to reveal a C-terminal glycine. ATG8 ubiquitin-like activity requires the exposure of the glycine at the C-terminus for its conjugation to phosphatidylethanolamine (PE) and its insertion to membranes, which is necessary for autophagy. The ATG8-PE conjugate mediates tethering between adjacent membranes and stimulates membrane hemifusion, leading to expansion of the autophagosomal membrane during autophagy. In addition to the protease activity, also catalyzes deconjugation of PE-conjugated forms of ATG8 during macroautophagy: ATG8 delipidation is required to release the protein from membranes, which facilitates multiple events during macroautophagy, and especially for efficient autophagosome biogenesis, the assembly of ATG9-containing tubulovesicular clusters into phagophores/autophagosomes, and for the disassembly of PAS-associated ATG components. ATG8 delipidation by ATG4 also recycles ATG8-PE generated on inappropriate membranes to maintain a reservoir of unlipidated ATG8 that is required for autophagosome formation at the PAS. In Kluyveromyces marxianus (strain DMKU3-1042 / BCC 29191 / NBRC 104275) (Yeast), this protein is Cysteine protease ATG4.